The following is a 496-amino-acid chain: Galactan beta-1,4-galactosyltransferase GALS1 (496 aa).

Residues 22 to 42 (IIATLLALSLVMIVWNLPPYY) form a helical membrane-spanning segment. The GT92 domain maps to 232–464 (DYLYCGSSLY…AKKKVTLYNK (233 aa)).

This sequence belongs to the glycosyltransferase 92 family. In terms of tissue distribution, expressed in root vasculature, mature leaves, trichomes, flowers, siliques and seeds.

The protein resides in the golgi apparatus membrane. Functionally, involved in the biosynthesis of beta-1,4-galactan. Can transfer galactose residues from UDP-galactose to beta-1,4-galactopentaose in vitro. Forms specifically beta-1,4-galactosyl linkages and can add successive beta-1,4-galactosyl residues to the acceptor. Beta-1,4-galactans are abundant polysaccharides in plant cell walls and are found as side-chain of rhamnogalacturonan I, which is a major component of pectin. The chain is Galactan beta-1,4-galactosyltransferase GALS1 from Arabidopsis thaliana (Mouse-ear cress).